The sequence spans 310 residues: Glutaminase 1 (310 aa).

Substrate contacts are provided by serine 66, asparagine 117, glutamate 161, asparagine 168, tyrosine 192, tyrosine 244, and valine 262. N6-acetyllysine is present on lysine 294.

The protein belongs to the glutaminase family. Homotetramer.

The catalysed reaction is L-glutamine + H2O = L-glutamate + NH4(+). This chain is Glutaminase 1, found in Escherichia coli O6:H1 (strain CFT073 / ATCC 700928 / UPEC).